A 255-amino-acid chain; its full sequence is Ribonuclease HII (255 aa).

Positions 73 to 255 (LYIGGIDEAG…HRKSFLKNIL (183 aa)) constitute an RNase H type-2 domain. A divalent metal cation contacts are provided by D79, E80, and D171.

Belongs to the RNase HII family. It depends on Mn(2+) as a cofactor. Requires Mg(2+) as cofactor.

It localises to the cytoplasm. The enzyme catalyses Endonucleolytic cleavage to 5'-phosphomonoester.. Functionally, endonuclease that specifically degrades the RNA of RNA-DNA hybrids. The polypeptide is Ribonuclease HII (Clostridioides difficile (strain 630) (Peptoclostridium difficile)).